We begin with the raw amino-acid sequence, 1026 residues long: MATTSRRPVLTRAKVIVPVLLAVALVIAFVAIFTRLYTDLLFYRSVDFSKVFTTVIYTRILLFLIFGAVMAVVIGTNIVLGYRFRPQLRPLSTEQQNLERYRSAIEPYMKLVLVAVAAVFGLAAGLSASGRWRTWLLWVNGESFGTKDPQFHRDISYYAFTYPFQRFLLGFLLTAVLLSLLVTVLTHYLFGGIRLQTPGERVTPAAKAHISVLLGLLALLKAWAYYLDRFGSVFSSRGVATGASYTDVHAVLPAKLILLFISLACAVLFIYNIFQRGWTLPLLGAGILVLSSVVIGGIYPAFIQQFQVRPNEATREQPYIERNIAATRAAYGIQNVKPQSYAARTDVTAAQVAADTGTVPNTRLLDPSKLSRTFQQLQQIRGYYTFPKTLDVDRYTVTGADKKQTTRDYVVSVRELNQAGLGADQRNWINEHLTYTHGKGFVAAPSNTVDEGQPAFDEGEQNLPQKGDFDVRENRVYFGEMSPNYSVVGTRQVEIDGPGPGADTQVTTTYTGDGGVSIGSTFRQALFALRFGEKNLLLSGDITKNSRILYERNPRDRVSKAAPWLTLDGDPYPAVVNGRITWILDGYTTSDGYPYSARRTLGDVTADSVTAQSGNRARQAANQVNYIRNSVKATVDAYDGTVTLYAWDESDPVLRTWMKAFPDTVKPKKDISPSLMAHLRYPEDLFKVQRDLIGQYHVSDPRDFYSQEDFWQVSESPDGSGQPQPPFYVYSKLPDRSGPSYNLTSPLISARSSKLAAYMAVSSDPSNYGQFTLLKLPPGGTINGPVQVQNAIESNGDVANKLTLWRGAGSQTIEGNLLTLPVAGGLLYVEPYYVQARGGSGYPTLQGIATAFGERIGFGTSLGEALDKVFGSGAGAAAAGAGTGATTTTGGGGQATTQGGGTGAAPPGGTSGLQDAVNDADSAYKAGQDALRKNPPDFNAYGQAQTDLADALSRLRTLASPPTTPPAASPTPSRSAAPTTRGTAAGSAPPGTTPAVAAPAGPSGPPSPAGATAGPPQQPRAAPPPG.

7 helical membrane passes run 13–33 (AKVI…VAIF), 60–80 (ILLF…NIVL), 108–128 (YMKL…GLSA), 167–187 (FLLG…VLTH), 208–228 (AHIS…YYLD), 250–270 (AVLP…VLFI), and 283–303 (LGAG…PAFI). Low complexity predominate over residues 877–888 (AAAGAGTGATTT). Disordered regions lie at residues 877 to 916 (AAAG…LQDA) and 958 to 1026 (LASP…PPPG). Positions 889-903 (TGGGGQATTQGGGTG) are enriched in gly residues. The segment covering 970–1001 (PTPSRSAAPTTRGTAAGSAPPGTTPAVAAPAG) has biased composition (low complexity). Residues 1016–1026 (PQQPRAAPPPG) show a composition bias toward pro residues.

It belongs to the UPF0182 family.

Its subcellular location is the cell membrane. The sequence is that of UPF0182 protein FRAAL6027 from Frankia alni (strain DSM 45986 / CECT 9034 / ACN14a).